The following is a 626-amino-acid chain: tRNA uridine 5-carboxymethylaminomethyl modification enzyme MnmG (626 aa).

13-18 (GGGHAG) contacts FAD. 273-287 (GPRYCPSIEDKIHRF) contributes to the NAD(+) binding site.

Belongs to the MnmG family. Homodimer. Heterotetramer of two MnmE and two MnmG subunits. It depends on FAD as a cofactor.

It localises to the cytoplasm. Functionally, NAD-binding protein involved in the addition of a carboxymethylaminomethyl (cmnm) group at the wobble position (U34) of certain tRNAs, forming tRNA-cmnm(5)s(2)U34. The chain is tRNA uridine 5-carboxymethylaminomethyl modification enzyme MnmG from Acinetobacter baumannii (strain ACICU).